Here is a 189-residue protein sequence, read N- to C-terminus: Interferon alpha-21 (189 aa).

Residues 1–23 (MALSFSLLMAVLVLSYKSICSLG) form the signal peptide. Cystine bridges form between cysteine 24-cysteine 122 and cysteine 52-cysteine 162.

This sequence belongs to the alpha/beta interferon family.

It is found in the secreted. Its function is as follows. Produced by macrophages, IFN-alpha have antiviral activities. Interferon stimulates the production of two enzymes: a protein kinase and an oligoadenylate synthetase. This is Interferon alpha-21 (IFNA21) from Homo sapiens (Human).